The chain runs to 465 residues: D-ornithine/D-lysine decarboxylase (465 aa).

K80 is subject to N6-(pyridoxal phosphate)lysine. Pyridoxal 5'-phosphate is bound by residues G259 and 307-310; that span reads EPGR. Catalysis depends on C387, which acts as the Proton donor. Y422 contacts pyridoxal 5'-phosphate.

It belongs to the Orn/Lys/Arg decarboxylase class-II family. In terms of assembly, homodimer. It depends on pyridoxal 5'-phosphate as a cofactor.

It catalyses the reaction D-ornithine + H(+) = putrescine + CO2. The catalysed reaction is D-lysine + H(+) = cadaverine + CO2. In terms of biological role, catalyzes the decarboxylation of D-ornithine and D-lysine. Ornithine is likely the physiological substrate. Has no detectable diaminopimelate decarboxylase activity in vitro. The protein is D-ornithine/D-lysine decarboxylase of Salmonella typhimurium (strain LT2 / SGSC1412 / ATCC 700720).